We begin with the raw amino-acid sequence, 401 residues long: Formate dehydrogenase (401 aa).

Substrate is bound by residues isoleucine 123 and asparagine 147. NAD(+) is bound by residues serine 148, 202 to 203 (RI), aspartate 222, 257 to 261 (PLHPE), threonine 283, aspartate 309, 333 to 336 (HISG), and serine 381.

This sequence belongs to the D-isomer specific 2-hydroxyacid dehydrogenase family. FDH subfamily. In terms of assembly, homodimer.

Its subcellular location is the cytoplasm. It carries out the reaction formate + NAD(+) = CO2 + NADH. In terms of biological role, catalyzes the NAD(+)-dependent oxidation of formate to carbon dioxide. Formate oxidation is the final step in the methanol oxidation pathway in methylotrophic microorganisms. Has a role in the detoxification of exogenous formate in non-methylotrophic organisms. The protein is Formate dehydrogenase of Pseudomonas sp. (strain 101) (Achromobacter parvulus T1).